A 497-amino-acid polypeptide reads, in one-letter code: MASEENNDLENLLDIQLIEQKESLSSIDEALLSDPSNPELLSVHEELLSAIKEVEEGLLHLKRARLLEEADIVLNGLNHDAGVKPEHLEPEKTEEKKDLDGSKCRFRHTDGRWYNGRIIGFEGSDSAKISFLTPTSESMMICKFFMQQRCRFGSSCRSSHGLDVPISSLKNYEQTEWKQLMVGSKIWAVSGSKYDIWRKAELESWDDELQVGGVVFRDDKSSAKLGSDSLALSEYAQMTDDDGEEEEEEDEQQSASDSEDSVSSDYDEGSPQGIGFLESTNLPRGVQTDTALFAKWENHTRGIASKMMASMGYREGMGLGVSGQGILNPILVKVLPAKRSLDYALEHIRNGECKSEKQKKKRSRGGKRKRGKKFAEAAKAAKQEEESKPDLFSLINEQIFPTRHEKVHSESVKNRQNKGPVDRKALVEYQDEVRDLKLEMLKLEQMVNRNKKDLVVSEAATRRLKEVRKALASTLACQAAASNAIVSKENEKKWLKF.

A C3H1-type zinc finger spans residues 136 to 163; it reads SESMMICKFFMQQRCRFGSSCRSSHGLD. The tract at residues 236–281 is disordered; sequence AQMTDDDGEEEEEEDEQQSASDSEDSVSSDYDEGSPQGIGFLESTN. Over residues 239–268 the composition is skewed to acidic residues; sequence TDDDGEEEEEEDEQQSASDSEDSVSSDYDE. A G-patch domain is found at 300–346; the sequence is TRGIASKMMASMGYREGMGLGVSGQGILNPILVKVLPAKRSLDYALE. The segment at 352–387 is disordered; that stretch reads ECKSEKQKKKRSRGGKRKRGKKFAEAAKAAKQEEES. Over residues 357-372 the composition is skewed to basic residues; sequence KQKKKRSRGGKRKRGK. Over residues 373–387 the composition is skewed to basic and acidic residues; sequence KFAEAAKAAKQEEES.

The protein is Zinc finger CCCH domain-containing protein 22 of Arabidopsis thaliana (Mouse-ear cress).